The following is a 433-amino-acid chain: uncharacterized protein (433 aa).

Belongs to the arrestin family.

This is an uncharacterized protein from Schizosaccharomyces pombe (strain 972 / ATCC 24843) (Fission yeast).